The chain runs to 200 residues: Peptidyl-tRNA hydrolase (200 aa).

Tyrosine 15 contributes to the tRNA binding site. The Proton acceptor role is filled by histidine 20. The tRNA site is built by tyrosine 66, asparagine 68, and asparagine 114.

This sequence belongs to the PTH family. As to quaternary structure, monomer.

Its subcellular location is the cytoplasm. It catalyses the reaction an N-acyl-L-alpha-aminoacyl-tRNA + H2O = an N-acyl-L-amino acid + a tRNA + H(+). In terms of biological role, hydrolyzes ribosome-free peptidyl-tRNAs (with 1 or more amino acids incorporated), which drop off the ribosome during protein synthesis, or as a result of ribosome stalling. Functionally, catalyzes the release of premature peptidyl moieties from peptidyl-tRNA molecules trapped in stalled 50S ribosomal subunits, and thus maintains levels of free tRNAs and 50S ribosomes. In Paraburkholderia xenovorans (strain LB400), this protein is Peptidyl-tRNA hydrolase.